Consider the following 344-residue polypeptide: MMNRLINEQDGRNYSAKPDSSAAGSQENENTIELTVPDNLAGLRLDQALAQLLPQWSRSRLQGWIEQKCVSVDSAAATCKQKVWGGESIRVIAGQTENDQSHQAEAIPLKILFEDDHLIIIDKPAGLVVHPGNGNWHGTLLNALLNHAPQLSQVPRAGIVHRLDKDTTGLLVVAKTIEAQFDLARQLQQRTVKRHYLALVLGKLEKDGVVDAPIGRHPIHRTRMAVVQNGKPARTHYRVLEKFTASTLLHCSLETGRTHQIRVHLLSIGHPLAGDPVYGRTSPDPSTADAVVRLPRQALHAWQLELTHPHSGQILLWESPLPDDMAALLQAIRNLPHSSVSRPL.

The tract at residues 1–29 (MMNRLINEQDGRNYSAKPDSSAAGSQENE) is disordered. The region spanning 43–116 (LRLDQALAQL…IPLKILFEDD (74 aa)) is the S4 RNA-binding domain. Asp-164 is an active-site residue.

Belongs to the pseudouridine synthase RluA family.

Its subcellular location is the cytoplasm. It carries out the reaction uridine(1911/1915/1917) in 23S rRNA = pseudouridine(1911/1915/1917) in 23S rRNA. Its function is as follows. Responsible for synthesis of pseudouridine from uracil at positions 1911, 1915 and 1917 in 23S ribosomal RNA. The chain is Ribosomal large subunit pseudouridine synthase D (rluD) from Nitrosomonas europaea (strain ATCC 19718 / CIP 103999 / KCTC 2705 / NBRC 14298).